Here is a 714-residue protein sequence, read N- to C-terminus: Testis-expressed protein 13D (714 aa).

2 disordered regions span residues 300-419 and 431-675; these read GSFP…GCSD and RRCK…PASF. Basic and acidic residues-rich tracts occupy residues 307–320 and 366–378; these read SRSHSQGEGSERSQ and GNRERQNQKEGPK. Basic residues predominate over residues 379–392; sequence RARRMHTLVFRRSH. Over residues 403-416 the composition is skewed to polar residues; it reads TVPQGDSRSYSQEG. Basic and acidic residues-rich tracts occupy residues 495–505, 557–567, and 636–646; these read CKPEEGPERPQ and SRSHGVRESPK. The segment at 677–706 adopts a RanBP2-type zinc-finger fold; sequence VPVNWKCPWCKAINFSWRTACYKCKKACVP.

The protein belongs to the TEX13 family.

In Homo sapiens (Human), this protein is Testis-expressed protein 13D.